A 237-amino-acid polypeptide reads, in one-letter code: Derlin-2 (237 aa).

At 1–20 the chain is on the cytoplasmic side; sequence MNGVVAALEEMPPVTRFYTG. The helical transmembrane segment at 21 to 41 threads the bilayer; sequence ACVLLTTAVHLEFVTPFHLYF. Residues 42 to 54 are Lumenal-facing; that stretch reads NWELIIRKYQFWR. A helical membrane pass occupies residues 55-75; that stretch reads LITSFCFFGSFGFSFLFNMIF. Over 76–97 the chain is Cytoplasmic; the sequence is TYRYCMMLEEGSFRGRRADFVY. The chain crosses the membrane as a helical span at residues 98–118; it reads MFLFGAVLMILSGIFVQILFL. Topologically, residues 119–166 are lumenal; the sequence is GQAFTIMLVYIWSRRNPMIQMNFFGVLTFTAPYLPWVLLLFSLLLGNN. The chain crosses the membrane as a helical span at residues 167–187; that stretch reads AVVDFMGIACGHIYFFLEDVF. The Cytoplasmic portion of the chain corresponds to 188–237; it reads PFQEHGKRFLKTPQWLVYLFDERRPEPLPEDERPGGFEWGDEQPEQEQHD. A compositionally biased stretch (basic and acidic residues) spans 212–222; it reads PEPLPEDERPG. The disordered stretch occupies residues 212-237; the sequence is PEPLPEDERPGGFEWGDEQPEQEQHD. Residues 226-237 are compositionally biased toward acidic residues; the sequence is WGDEQPEQEQHD.

Belongs to the derlin family.

Its subcellular location is the endoplasmic reticulum membrane. Its function is as follows. May be required for the degradation process of some specific misfolded endoplasmic reticulum (ER) luminal proteins. Participates in the transfer of misfolded proteins from the ER to the cytosol, where they are destroyed by the proteasome in a ubiquitin-dependent manner. Its precise function remains unclear, but its ability to complement der1 mutations in C.cerevisiae, suggests a similar function in the degradation of ER misfolded proteins. This Caenorhabditis elegans protein is Derlin-2.